Reading from the N-terminus, the 156-residue chain is D-aminoacyl-tRNA deacylase (156 aa).

The short motif at 139-140 (GP) is the Gly-cisPro motif, important for rejection of L-amino acids element.

Belongs to the DTD family. Homodimer.

The protein localises to the cytoplasm. The catalysed reaction is glycyl-tRNA(Ala) + H2O = tRNA(Ala) + glycine + H(+). It carries out the reaction a D-aminoacyl-tRNA + H2O = a tRNA + a D-alpha-amino acid + H(+). Its function is as follows. An aminoacyl-tRNA editing enzyme that deacylates mischarged D-aminoacyl-tRNAs. Also deacylates mischarged glycyl-tRNA(Ala), protecting cells against glycine mischarging by AlaRS. Acts via tRNA-based rather than protein-based catalysis; rejects L-amino acids rather than detecting D-amino acids in the active site. By recycling D-aminoacyl-tRNA to D-amino acids and free tRNA molecules, this enzyme counteracts the toxicity associated with the formation of D-aminoacyl-tRNA entities in vivo and helps enforce protein L-homochirality. The sequence is that of D-aminoacyl-tRNA deacylase from Marinobacter nauticus (strain ATCC 700491 / DSM 11845 / VT8) (Marinobacter aquaeolei).